We begin with the raw amino-acid sequence, 188 residues long: Inosine triphosphate pyrophosphatase (188 aa).

Position 11-16 (11-16) interacts with ITP; that stretch reads TGNKHK. Residue Glu-39 participates in Mg(2+) binding. ITP contacts are provided by residues Lys-51, 67-68, Lys-84, 143-146, and 171-172; these read DT, FGWN, and HR.

It belongs to the HAM1 NTPase family. Homodimer. The cofactor is Mg(2+). It depends on Mn(2+) as a cofactor.

It localises to the cytoplasm. It is found in the nucleus. The enzyme catalyses ITP + H2O = IMP + diphosphate + H(+). It catalyses the reaction dITP + H2O = dIMP + diphosphate + H(+). It carries out the reaction XTP + H2O = XMP + diphosphate + H(+). Pyrophosphatase that hydrolyzes non-canonical purine nucleotides such as inosine triphosphate (ITP), deoxyinosine triphosphate (dITP) or xanthosine 5'-triphosphate (XTP) to their respective monophosphate derivatives. The enzyme does not distinguish between the deoxy- and ribose forms. Probably excludes non-canonical purines from RNA and DNA precursor pools, thus preventing their incorporation into RNA and DNA and avoiding chromosomal lesions. This Schizosaccharomyces pombe (strain 972 / ATCC 24843) (Fission yeast) protein is Inosine triphosphate pyrophosphatase.